We begin with the raw amino-acid sequence, 393 residues long: 1-deoxy-D-xylulose 5-phosphate reductoisomerase (393 aa).

Threonine 10, glycine 11, serine 12, isoleucine 13, arginine 37, and asparagine 124 together coordinate NADPH. Lysine 125 provides a ligand contact to 1-deoxy-D-xylulose 5-phosphate. Residue glutamate 126 coordinates NADPH. Mn(2+) is bound at residue aspartate 150. 1-deoxy-D-xylulose 5-phosphate-binding residues include serine 151, glutamate 152, serine 182, and histidine 205. Glutamate 152 is a Mn(2+) binding site. Residue glycine 211 participates in NADPH binding. Residues serine 218, asparagine 223, lysine 224, and glutamate 227 each contribute to the 1-deoxy-D-xylulose 5-phosphate site. Glutamate 227 provides a ligand contact to Mn(2+).

This sequence belongs to the DXR family. Requires Mg(2+) as cofactor. Mn(2+) is required as a cofactor.

The catalysed reaction is 2-C-methyl-D-erythritol 4-phosphate + NADP(+) = 1-deoxy-D-xylulose 5-phosphate + NADPH + H(+). Its pathway is isoprenoid biosynthesis; isopentenyl diphosphate biosynthesis via DXP pathway; isopentenyl diphosphate from 1-deoxy-D-xylulose 5-phosphate: step 1/6. Catalyzes the NADPH-dependent rearrangement and reduction of 1-deoxy-D-xylulose-5-phosphate (DXP) to 2-C-methyl-D-erythritol 4-phosphate (MEP). This Nitrosococcus oceani (strain ATCC 19707 / BCRC 17464 / JCM 30415 / NCIMB 11848 / C-107) protein is 1-deoxy-D-xylulose 5-phosphate reductoisomerase.